Reading from the N-terminus, the 170-residue chain is Putative zinc finger protein 542 (170 aa).

Residues 1 to 42 (MLENYQNLVWLGLSISKSVISLLEKRKLPWIMAKEEIRGPLP) enclose the KRAB domain. C2H2-type zinc fingers lie at residues 98-120 (NVCK…KRNH) and 126-148 (NQCL…QRIH). The C2H2-type 3; degenerate zinc finger occupies 154–170 (YKCNECIKTFNQRAHLT).

It belongs to the krueppel C2H2-type zinc-finger protein family.

The protein resides in the nucleus. May be involved in transcriptional regulation. This Homo sapiens (Human) protein is Putative zinc finger protein 542 (ZNF542P).